The sequence spans 613 residues: Dihydroxy-acid dehydratase (613 aa).

Residue Asp81 participates in Mg(2+) binding. A [2Fe-2S] cluster-binding site is contributed by Cys122. Asp123 and Lys124 together coordinate Mg(2+). At Lys124 the chain carries N6-carboxylysine. A [2Fe-2S] cluster-binding site is contributed by Cys193. Glu489 serves as a coordination point for Mg(2+). The active-site Proton acceptor is the Ser515.

The protein belongs to the IlvD/Edd family. In terms of assembly, homodimer. [2Fe-2S] cluster serves as cofactor. It depends on Mg(2+) as a cofactor.

The catalysed reaction is (2R)-2,3-dihydroxy-3-methylbutanoate = 3-methyl-2-oxobutanoate + H2O. It carries out the reaction (2R,3R)-2,3-dihydroxy-3-methylpentanoate = (S)-3-methyl-2-oxopentanoate + H2O. It participates in amino-acid biosynthesis; L-isoleucine biosynthesis; L-isoleucine from 2-oxobutanoate: step 3/4. It functions in the pathway amino-acid biosynthesis; L-valine biosynthesis; L-valine from pyruvate: step 3/4. Its function is as follows. Functions in the biosynthesis of branched-chain amino acids. Catalyzes the dehydration of (2R,3R)-2,3-dihydroxy-3-methylpentanoate (2,3-dihydroxy-3-methylvalerate) into 2-oxo-3-methylpentanoate (2-oxo-3-methylvalerate) and of (2R)-2,3-dihydroxy-3-methylbutanoate (2,3-dihydroxyisovalerate) into 2-oxo-3-methylbutanoate (2-oxoisovalerate), the penultimate precursor to L-isoleucine and L-valine, respectively. The chain is Dihydroxy-acid dehydratase from Pseudomonas putida (strain W619).